We begin with the raw amino-acid sequence, 37 residues long: Photosystem I reaction center subunit VIII (37 aa).

Residues 7 to 27 (LPSFFVPLVGLVFPAIAMASL) form a helical membrane-spanning segment.

Belongs to the PsaI family.

The protein localises to the plastid. It localises to the chloroplast thylakoid membrane. In terms of biological role, may help in the organization of the PsaL subunit. In Eucalyptus globulus subsp. globulus (Tasmanian blue gum), this protein is Photosystem I reaction center subunit VIII.